The primary structure comprises 102 residues: Small ribosomal subunit protein uS10 (102 aa).

The protein belongs to the universal ribosomal protein uS10 family. As to quaternary structure, part of the 30S ribosomal subunit.

Its function is as follows. Involved in the binding of tRNA to the ribosomes. This chain is Small ribosomal subunit protein uS10, found in Pelobacter propionicus (strain DSM 2379 / NBRC 103807 / OttBd1).